The primary structure comprises 228 residues: Orotidine 5'-phosphate decarboxylase (228 aa).

Substrate is bound by residues D10, K33, 60–69, T116, R178, Q187, G207, and R208; that span reads DLKLYDIPHT. The active-site Proton donor is the K62.

It belongs to the OMP decarboxylase family. Type 1 subfamily. As to quaternary structure, homodimer.

The enzyme catalyses orotidine 5'-phosphate + H(+) = UMP + CO2. It functions in the pathway pyrimidine metabolism; UMP biosynthesis via de novo pathway; UMP from orotate: step 2/2. Functionally, catalyzes the decarboxylation of orotidine 5'-monophosphate (OMP) to uridine 5'-monophosphate (UMP). This chain is Orotidine 5'-phosphate decarboxylase, found in Oenococcus oeni (strain ATCC BAA-331 / PSU-1).